We begin with the raw amino-acid sequence, 479 residues long: Glutamate--tRNA ligase (479 aa).

A 'HIGH' region motif is present at residues 9–19 (PSPTGLFHIGT). Positions 248–252 (KLSKR) match the 'KMSKS' region motif. An ATP-binding site is contributed by Lys-251.

It belongs to the class-I aminoacyl-tRNA synthetase family. Glutamate--tRNA ligase type 1 subfamily. Monomer.

Its subcellular location is the cytoplasm. It carries out the reaction tRNA(Glu) + L-glutamate + ATP = L-glutamyl-tRNA(Glu) + AMP + diphosphate. In terms of biological role, catalyzes the attachment of glutamate to tRNA(Glu) in a two-step reaction: glutamate is first activated by ATP to form Glu-AMP and then transferred to the acceptor end of tRNA(Glu). In Prochlorococcus marinus (strain MIT 9215), this protein is Glutamate--tRNA ligase.